A 348-amino-acid chain; its full sequence is Dihydroorotase (348 aa).

Positions 17 and 19 each coordinate Zn(2+). Substrate is bound by residues 19–21 (HLR) and Asn45. 3 residues coordinate Zn(2+): Lys103, His140, and His178. At Lys103 the chain carries N6-carboxylysine. His140 contributes to the substrate binding site. Leu223 contacts substrate. Asp251 is a binding site for Zn(2+). Asp251 is an active-site residue. Substrate-binding residues include His255 and Ala267.

Belongs to the metallo-dependent hydrolases superfamily. DHOase family. Class II DHOase subfamily. In terms of assembly, homodimer. Requires Zn(2+) as cofactor.

The catalysed reaction is (S)-dihydroorotate + H2O = N-carbamoyl-L-aspartate + H(+). It functions in the pathway pyrimidine metabolism; UMP biosynthesis via de novo pathway; (S)-dihydroorotate from bicarbonate: step 3/3. Catalyzes the reversible cyclization of carbamoyl aspartate to dihydroorotate. In Yersinia enterocolitica serotype O:8 / biotype 1B (strain NCTC 13174 / 8081), this protein is Dihydroorotase.